The sequence spans 339 residues: DNA-directed RNA polymerase subunit alpha (339 aa).

Residues 1–233 (MVREEVAGST…DLFLPFLHAE (233 aa)) form an alpha N-terminal domain (alpha-NTD) region. The segment at 264 to 339 (KKGIPLNSIF…IDLLKNKLSF (76 aa)) is alpha C-terminal domain (alpha-CTD).

This sequence belongs to the RNA polymerase alpha chain family. As to quaternary structure, in plastids the minimal PEP RNA polymerase catalytic core is composed of four subunits: alpha, beta, beta', and beta''. When a (nuclear-encoded) sigma factor is associated with the core the holoenzyme is formed, which can initiate transcription.

The protein localises to the plastid. The protein resides in the chloroplast. It carries out the reaction RNA(n) + a ribonucleoside 5'-triphosphate = RNA(n+1) + diphosphate. Its function is as follows. DNA-dependent RNA polymerase catalyzes the transcription of DNA into RNA using the four ribonucleoside triphosphates as substrates. This is DNA-directed RNA polymerase subunit alpha from Aegilops tauschii (Tausch's goatgrass).